Reading from the N-terminus, the 527-residue chain is Amidophosphoribosyltransferase (527 aa).

The segment at 1–30 (MAVDSDYVTDRAAGSRQTVTGQQPEQDLNS) is disordered. The propeptide occupies 1–34 (MAVDSDYVTDRAAGSRQTVTGQQPEQDLNSPREE). Polar residues predominate over residues 15 to 29 (SRQTVTGQQPEQDLN). Catalysis depends on Cys35, which acts as the Nucleophile. The Glutamine amidotransferase type-2 domain occupies 35–261 (CGVFGVWAPG…PGELLAIDAD (227 aa)). A [4Fe-4S] cluster-binding site is contributed by Cys276. 3 residues coordinate Mg(2+): Ser323, Asp385, and Asp386. [4Fe-4S] cluster is bound by residues Cys422, Cys478, and Cys481.

It in the C-terminal section; belongs to the purine/pyrimidine phosphoribosyltransferase family. The cofactor is Mg(2+). [4Fe-4S] cluster serves as cofactor.

The enzyme catalyses 5-phospho-beta-D-ribosylamine + L-glutamate + diphosphate = 5-phospho-alpha-D-ribose 1-diphosphate + L-glutamine + H2O. The protein operates within purine metabolism; IMP biosynthesis via de novo pathway; N(1)-(5-phospho-D-ribosyl)glycinamide from 5-phospho-alpha-D-ribose 1-diphosphate: step 1/2. In terms of biological role, catalyzes the formation of phosphoribosylamine from phosphoribosylpyrophosphate (PRPP) and glutamine. This is Amidophosphoribosyltransferase from Mycobacterium bovis (strain ATCC BAA-935 / AF2122/97).